The following is a 795-amino-acid chain: Glutamine--tRNA ligase, cytoplasmic (795 aa).

The disordered stretch occupies residues 188–220 (ADNEKPTKKKEKKEKPAKVEEKKAVVETTAEPS). The segment covering 200-212 (KEKPAKVEEKKAV) has biased composition (basic and acidic residues). The short motif at 277–287 (PEPNGYLHIGH) is the 'HIGH' region element. Residues 278–280 (EPN) and 284–290 (HIGHAKA) contribute to the ATP site. The L-glutamine site is built by Asp-310 and Tyr-450. Residues Thr-469, 498 to 499 (RL), and 506 to 508 (MSK) each bind ATP. Positions 505 to 509 (VMSKR) match the 'KMSKS' region motif.

Belongs to the class-I aminoacyl-tRNA synthetase family.

It localises to the cytoplasm. The protein resides in the cytosol. The catalysed reaction is tRNA(Gln) + L-glutamine + ATP = L-glutaminyl-tRNA(Gln) + AMP + diphosphate. This Arabidopsis thaliana (Mouse-ear cress) protein is Glutamine--tRNA ligase, cytoplasmic.